The following is a 418-amino-acid chain: AP-1 complex subunit mu (418 aa).

The region spanning Asn-176–Arg-417 is the MHD domain.

This sequence belongs to the adaptor complexes medium subunit family. In terms of assembly, adaptor protein complex 1 (AP-1) is a heterotetramer composed of two large adaptins (gamma- and beta'-type subunits), a medium adaptin (mu-type subunit AP47) and a small adaptin (sigma-type subunit AP19). In terms of processing, regulated by phosphorylation.

It localises to the golgi apparatus. The protein resides in the cytoplasmic vesicle. It is found in the clathrin-coated vesicle membrane. Component of the adapter complexes which link clathrin to receptors in coated vesicles. Clathrin-associated protein complexes are believed to interact with the cytoplasmic tails of membrane proteins, leading to their selection and concentration. AP47 is a subunit of the plasma membrane adapter. This chain is AP-1 complex subunit mu, found in Diplobatis ommata (Ocellated electric ray).